The following is a 227-amino-acid chain: UPF0173 metal-dependent hydrolase Saci_1512 (227 aa).

It belongs to the UPF0173 family.

This Sulfolobus acidocaldarius (strain ATCC 33909 / DSM 639 / JCM 8929 / NBRC 15157 / NCIMB 11770) protein is UPF0173 metal-dependent hydrolase Saci_1512.